A 361-amino-acid polypeptide reads, in one-letter code: Phosphoserine aminotransferase (361 aa).

Arg-42 contributes to the L-glutamate binding site. Pyridoxal 5'-phosphate is bound by residues 76 to 77 (AS), Trp-102, Thr-152, Asp-172, and Gln-195. Lys-196 carries the post-translational modification N6-(pyridoxal phosphate)lysine. Residue 237-238 (NT) coordinates pyridoxal 5'-phosphate.

The protein belongs to the class-V pyridoxal-phosphate-dependent aminotransferase family. SerC subfamily. As to quaternary structure, homodimer. Requires pyridoxal 5'-phosphate as cofactor.

It localises to the cytoplasm. It carries out the reaction O-phospho-L-serine + 2-oxoglutarate = 3-phosphooxypyruvate + L-glutamate. It catalyses the reaction 4-(phosphooxy)-L-threonine + 2-oxoglutarate = (R)-3-hydroxy-2-oxo-4-phosphooxybutanoate + L-glutamate. The protein operates within amino-acid biosynthesis; L-serine biosynthesis; L-serine from 3-phospho-D-glycerate: step 2/3. Its function is as follows. Catalyzes the reversible conversion of 3-phosphohydroxypyruvate to phosphoserine and of 3-hydroxy-2-oxo-4-phosphonooxybutanoate to phosphohydroxythreonine. The sequence is that of Phosphoserine aminotransferase from Halalkalibacterium halodurans (strain ATCC BAA-125 / DSM 18197 / FERM 7344 / JCM 9153 / C-125) (Bacillus halodurans).